A 399-amino-acid polypeptide reads, in one-letter code: Tryptophan synthase beta chain (399 aa).

The residue at position 92 (Lys-92) is an N6-(pyridoxal phosphate)lysine.

Belongs to the TrpB family. Tetramer of two alpha and two beta chains. Pyridoxal 5'-phosphate is required as a cofactor.

It carries out the reaction (1S,2R)-1-C-(indol-3-yl)glycerol 3-phosphate + L-serine = D-glyceraldehyde 3-phosphate + L-tryptophan + H2O. It participates in amino-acid biosynthesis; L-tryptophan biosynthesis; L-tryptophan from chorismate: step 5/5. Its function is as follows. The beta subunit is responsible for the synthesis of L-tryptophan from indole and L-serine. The chain is Tryptophan synthase beta chain from Oceanobacillus iheyensis (strain DSM 14371 / CIP 107618 / JCM 11309 / KCTC 3954 / HTE831).